Consider the following 60-residue polypeptide: Large ribosomal subunit protein bL32 (60 aa).

Basic residues predominate over residues 1–22 (MAVPKKKTSKSRRDMRRSHHAL). Positions 1 to 27 (MAVPKKKTSKSRRDMRRSHHALKGSAY) are disordered.

Belongs to the bacterial ribosomal protein bL32 family.

This Rhodospirillum centenum (strain ATCC 51521 / SW) protein is Large ribosomal subunit protein bL32.